Reading from the N-terminus, the 244-residue chain is Transcriptional regulatory protein YpdB (244 aa).

The 115-residue stretch at 2-116 (KVIIVEDEFL…RITGMLQKLE (115 aa)) folds into the Response regulatory domain. A 4-aspartylphosphate modification is found at D53. In terms of domain architecture, HTH LytTR-type spans 139-244 (INLVKDERII…VKEFRQLMHL (106 aa)).

In terms of processing, phosphorylated by YpdA.

It is found in the cytoplasm. In terms of biological role, member of the two-component regulatory system YpdA/YpdB. YpdB regulates expression of yhjX by binding to its promoter region. This is Transcriptional regulatory protein YpdB (ypdB) from Escherichia coli O157:H7.